A 261-amino-acid chain; its full sequence is Ribosomal RNA small subunit methyltransferase J (261 aa).

S-adenosyl-L-methionine is bound by residues 111–112, 127–128, 163–164, and Asp-181; these read RD, ER, and SS.

The protein belongs to the methyltransferase superfamily. RsmJ family.

Its subcellular location is the cytoplasm. It catalyses the reaction guanosine(1516) in 16S rRNA + S-adenosyl-L-methionine = N(2)-methylguanosine(1516) in 16S rRNA + S-adenosyl-L-homocysteine + H(+). Its function is as follows. Specifically methylates the guanosine in position 1516 of 16S rRNA. This is Ribosomal RNA small subunit methyltransferase J from Shewanella sp. (strain MR-4).